We begin with the raw amino-acid sequence, 458 residues long: Argininosuccinate lyase (458 aa).

It belongs to the lyase 1 family. Argininosuccinate lyase subfamily.

It localises to the cytoplasm. It carries out the reaction 2-(N(omega)-L-arginino)succinate = fumarate + L-arginine. Its pathway is amino-acid biosynthesis; L-arginine biosynthesis; L-arginine from L-ornithine and carbamoyl phosphate: step 3/3. The sequence is that of Argininosuccinate lyase from Pseudoalteromonas atlantica (strain T6c / ATCC BAA-1087).